A 378-amino-acid chain; its full sequence is MGDFVFCYGSHNRKLFSKYIVSTKNSHKFYFGKKQYIDIEIETIFSQKYIVVDFNDSLDFLNFIVDNEIYCNFTNNKHECESLEFHHNYLNYITQHKHLDIVKIFYKKFVPLIKSGRGVQSLQFCILQDIDPEVVKCVFKNGSLEDTKDFIINEFHKNPDITIEFMDEIISIYKHKLTKLFMENKIDKSIDNMEISLFQFLIPALKKDDVGLFNFIIEEICNLTSEIDKTKLDKTQLGYLESIDIDFGIRDINTLIDYYMLCDFDDCSPEDEMYFCPNIFRQLIFSLDNLDSLAGRILFDIPEYNVVEYVGIICDFIGETNPLLINKMLPEAKSTEMAQLLIDCGADYEKLYESKKFSKCNSCVKKLIKELIKETSDS.

This sequence belongs to the mimivirus L17x/L18x family.

This is an uncharacterized protein from Acanthamoeba polyphaga (Amoeba).